Here is an 833-residue protein sequence, read N- to C-terminus: Multiphosphoryl transfer protein 2 (833 aa).

The region spanning 2-91 is the HPr domain; sequence ALIVEFICEL…QWLRDEFPHC (90 aa). The active-site Tele-phosphohistidine intermediate; for HPr activity is the His-16. The residue at position 16 (His-16) is a Phosphohistidine; by EI. The tract at residues 143–653 is PTS EI; the sequence is LGNLPAAKGV…AAKARMAQLD (511 aa). The active-site Tele-phosphohistidine intermediate; for PTS EI activity is His-301. His-301 is subject to Phosphohistidine; by autocatalysis. Phosphoenolpyruvate contacts are provided by Arg-408 and Arg-444. Glu-543 and Asp-567 together coordinate Mg(2+). Phosphoenolpyruvate is bound by residues 566-567 and Arg-577; that span reads ND. The active-site Proton donor; for EI activity is Cys-614. One can recognise a PTS EIIA type-2 domain in the interval 688 to 830; that stretch reads PLVTAECITL…DAIASLLQHE (143 aa). The Tele-phosphohistidine intermediate; for PTS EIIA activity role is filled by His-750. His-750 carries the post-translational modification Phosphohistidine; by HPr.

The protein belongs to the PEP-utilizing enzyme family. Mg(2+) is required as a cofactor.

It localises to the cytoplasm. The enzyme catalyses L-histidyl-[protein] + phosphoenolpyruvate = N(pros)-phospho-L-histidyl-[protein] + pyruvate. It catalyses the reaction D-fructose(out) + N(pros)-phospho-L-histidyl-[protein] = D-fructose 1-phosphate(in) + L-histidyl-[protein]. Multifunctional protein that includes general (non sugar-specific) and sugar-specific components of the phosphoenolpyruvate-dependent sugar phosphotransferase system (sugar PTS). This major carbohydrate active transport system catalyzes the phosphorylation of incoming sugar substrates concomitantly with their translocation across the cell membrane. The enzyme II FrwABC PTS system is involved in fructose transport. The chain is Multiphosphoryl transfer protein 2 from Escherichia coli (strain K12).